Consider the following 296-residue polypeptide: Malonyl-[acyl-carrier protein] O-methyltransferase (296 aa).

It belongs to the methyltransferase superfamily.

The enzyme catalyses malonyl-[ACP] + S-adenosyl-L-methionine = malonyl-[ACP] methyl ester + S-adenosyl-L-homocysteine. It participates in cofactor biosynthesis; biotin biosynthesis. Its function is as follows. Converts the free carboxyl group of a malonyl-thioester to its methyl ester by transfer of a methyl group from S-adenosyl-L-methionine (SAM). It allows to synthesize pimeloyl-ACP via the fatty acid synthetic pathway. This is Malonyl-[acyl-carrier protein] O-methyltransferase from Methylovorus sp. (strain MP688).